The primary structure comprises 152 residues: uncharacterized protein (152 aa).

4 consecutive transmembrane segments (helical) span residues 2 to 22, 26 to 46, 92 to 112, and 128 to 148; these read ENLI…LSFL, FITF…HLIE, VVPI…FILL, and YIIT…YFLK.

The protein localises to the membrane. This is an uncharacterized protein from Acanthamoeba polyphaga mimivirus (APMV).